The following is an 884-amino-acid chain: Protein P (884 aa).

The tract at residues 1–184 is terminal protein domain (TP); that stretch reads MHPFSRLFRN…GKPYSWEHRQ (184 aa). A spacer region spans residues 185–387; that stretch reads LVQHNGQQHK…YCIHHIVSSL (203 aa). 2 disordered regions span residues 218–241 and 299–345; these read PSEPVSVSTRNLSNNISDKSQKST and RNSG…DFSS. 2 stretches are compositionally biased toward polar residues: residues 222 to 241 and 323 to 332; these read VSVSTRNLSNNISDKSQKST and YSSNSTSQRY. A polymerase/reverse transcriptase domain (RT) region spans residues 388 to 729; the sequence is DDWGPCTVTG…YEELWPVVRQ (342 aa). The region spanning 398–639 is the Reverse transcriptase domain; that stretch reads DVTIKSPRTP…NHLHFMGYVI (242 aa). 3 residues coordinate Mg(2+): aspartate 470, aspartate 590, and aspartate 591.

The protein belongs to the hepadnaviridae P protein family.

It catalyses the reaction DNA(n) + a 2'-deoxyribonucleoside 5'-triphosphate = DNA(n+1) + diphosphate. The enzyme catalyses Endonucleolytic cleavage to 5'-phosphomonoester.. Its activity is regulated as follows. Activated by host HSP70 and HSP40 in vitro to be able to bind the epsilon loop of the pgRNA. Because deletion of the RNase H region renders the protein partly chaperone-independent, the chaperones may be needed indirectly to relieve occlusion of the RNA-binding site by this domain. Inhibited by several reverse-transcriptase inhibitors: Lamivudine, Adefovir and Entecavir. Its function is as follows. Multifunctional enzyme that converts the viral RNA genome into dsDNA in viral cytoplasmic capsids. This enzyme displays a DNA polymerase activity that can copy either DNA or RNA templates, and a ribonuclease H (RNase H) activity that cleaves the RNA strand of RNA-DNA heteroduplexes in a partially processive 3'- to 5'-endonucleasic mode. Neo-synthesized pregenomic RNA (pgRNA) are encapsidated together with the P protein, and reverse-transcribed inside the nucleocapsid. Initiation of reverse-transcription occurs first by binding the epsilon loop on the pgRNA genome, and is initiated by protein priming, thereby the 5'-end of (-)DNA is covalently linked to P protein. Partial (+)DNA is synthesized from the (-)DNA template and generates the relaxed circular DNA (RC-DNA) genome. After budding and infection, the RC-DNA migrates in the nucleus, and is converted into a plasmid-like covalently closed circular DNA (cccDNA). The activity of P protein does not seem to be necessary for cccDNA generation, and is presumably released from (+)DNA by host nuclear DNA repair machinery. The protein is Protein P of Marmota monax (Woodchuck).